Reading from the N-terminus, the 207-residue chain is tRNA (pseudouridine(54)-N(1))-methyltransferase (207 aa).

Residue L137 participates in S-adenosyl-L-methionine binding.

This sequence belongs to the methyltransferase superfamily. TrmY family. Homodimer.

The protein localises to the cytoplasm. The enzyme catalyses pseudouridine(54) in tRNA + S-adenosyl-L-methionine = N(1)-methylpseudouridine(54) in tRNA + S-adenosyl-L-homocysteine + H(+). In terms of biological role, specifically catalyzes the N1-methylation of pseudouridine at position 54 (Psi54) in tRNAs. The polypeptide is tRNA (pseudouridine(54)-N(1))-methyltransferase (Halorubrum lacusprofundi (strain ATCC 49239 / DSM 5036 / JCM 8891 / ACAM 34)).